Reading from the N-terminus, the 421-residue chain is BEN domain-containing protein 5 (421 aa).

Position 133 is an N6-acetyllysine (Lys133). A coiled-coil region spans residues 180 to 243; that stretch reads RALYEELLRN…LNRRLQDVLL (64 aa). Lys258 is covalently cross-linked (Glycyl lysine isopeptide (Lys-Gly) (interchain with G-Cter in SUMO2)). A BEN domain is found at 302 to 408; it reads GSGIWVDEEK…EKIMDINKSC (107 aa).

Its function is as follows. Acts as a transcriptional repressor. The polypeptide is BEN domain-containing protein 5 (BEND5) (Homo sapiens (Human)).